Consider the following 209-residue polypeptide: Small ribosomal subunit protein uS4 (209 aa).

The interval 23–46 is disordered; sequence SRNPLLKKPHPPGQHGMQRKKKSD. The S4 RNA-binding domain occupies 93–156; the sequence is CRLDNMVYRM…RKLQSVQESL (64 aa).

It belongs to the universal ribosomal protein uS4 family. Part of the 30S ribosomal subunit. Contacts protein S5. The interaction surface between S4 and S5 is involved in control of translational fidelity.

In terms of biological role, one of the primary rRNA binding proteins, it binds directly to 16S rRNA where it nucleates assembly of the body of the 30S subunit. With S5 and S12 plays an important role in translational accuracy. In Chlamydia caviae (strain ATCC VR-813 / DSM 19441 / 03DC25 / GPIC) (Chlamydophila caviae), this protein is Small ribosomal subunit protein uS4.